The sequence spans 1412 residues: MKALLDLFKQVQQEEIFDAIKIGLASPDKIRSWSFGEVKKPETINYRTFKPERDGLFCAKIFGPIKDYECLCGKYKRLKHRGVICEKCGVEVTLAKVRRERMGHIELASPVAHIWFLKSLPSRLGMVLDMTLRDIERVLYFEAYVVIDPGMTPLKARQIMTEEDYYNKVEEYGDEFRAEMGAEGVRELLRSINIDEQVETLRTELKNTGSEAKIKKYAKRLKVLEAFQRSGIKPDWMILEVLPVLPPELRPLVPLDGGRFATSDLNDLYRRVINRNNRLKRLLELKAPEIIVRNEKRMLQEAVDSLLDNGRRGKAMTGANKRPLKSLADMIKGKGGRFRQNLLGKRVDYSGRSVIVVGPTLKLHQCGLPKLMALELFKPFIFNKLEVMGVATTIKAAKKEVENQTPVVWDILEEVIREHPVMLNRAPTLHRLGIQAFEPVLIEGKAIQLHPLVCAAFNADFDGDQMAVHVPLSLEAQMEARTLMLASNNVLFPANGDPSIVPSQDIVLGLYYATREAINGKGEGLSFTGVSEVIRAYENKEVELASRVNVRITEMVRNEDTSEGAPQFVPKISLYATTVGRAILSEILPPGLPFSVLNKPLKKKEISRLINTAFRKCGLRATVVFADQLMQSGFRLATRAGISICVDDMLVPTQKETIVGDAAKKVKEYDRQYMSGLVTAQERYNNVVDIWSATSEAVGKAMMEQLSTEPVIDRDGNETRQESFNSIYMMADSGARGSAVQIRQLAGMRGLMAKPDGSIIETPITANFREGLNVLQYFISTHGARKGLADTALKTANSGYLTRRLVDVTQDLVVVEDDCGTSNGVAMKALVEGGEVVEALRDRILGRVAASDVVNPETQETLYEAGALLDETAVEDIERLGIDEVRVRTALTCETRYGLCASCYGRDLGRGSLVNVGEAVGVIAAQSIGEPGTQLTMRTFHIGGAASRAAVASSVEAKSNGTVRFTASMRYVTNAKGEQIVISRSGEALITDDIGRERERHKIPYGATLLQLDGAAIKAGTQLATWDPLTRPIITEYGGTVKFENVEEGVTVAKQIDDVTGLSTLVVIDVKRRGSQAAKSVRPQVKLLDANGDEVKIPGTEHAVQIGFQVGALITVKDGQQVQVGEVLARIPTESQKTRDITGGLPRVAELFEARSPKDAGILAEVTGTVSFGKDTKGKQRLVITDLEGNQHEFLIAKEKQVLVHDGQVVNKGEMIVDGPADPHDILRLQGIEALSRYIVDEVQDVYRLQGVKINDKHIEVIVRQMLRRVQIVDNGDTRFIPGEQVERSDMLDENDRMIAEDKRPATYDNILLGITKASLSTDSFISAASFQETTRVLTEAAIMGKRDDLRGLKENVIVGRLIPAGTGLAFHKARKAKEQSDRERFDQIAAEEAFEFGTPSAPAEEPQHPAE.

Zn(2+)-binding residues include C70, C72, C85, and C88. Mg(2+) contacts are provided by D460, D462, and D464. C819, C893, C900, and C903 together coordinate Zn(2+). The tract at residues 1393-1412 is disordered; it reads EAFEFGTPSAPAEEPQHPAE.

This sequence belongs to the RNA polymerase beta' chain family. In terms of assembly, the RNAP catalytic core consists of 2 alpha, 1 beta, 1 beta' and 1 omega subunit. When a sigma factor is associated with the core the holoenzyme is formed, which can initiate transcription. It depends on Mg(2+) as a cofactor. Zn(2+) serves as cofactor.

The enzyme catalyses RNA(n) + a ribonucleoside 5'-triphosphate = RNA(n+1) + diphosphate. Its function is as follows. DNA-dependent RNA polymerase catalyzes the transcription of DNA into RNA using the four ribonucleoside triphosphates as substrates. The sequence is that of DNA-directed RNA polymerase subunit beta' from Burkholderia pseudomallei (strain 1106a).